The chain runs to 319 residues: L-lactate dehydrogenase (319 aa).

NAD(+)-binding positions include valine 17, aspartate 38, lysine 43, tyrosine 69, and 83–84 (GA). Substrate contacts are provided by glutamine 86 and arginine 92. NAD(+)-binding positions include threonine 105, 122-124 (ATN), and serine 147. 124–127 (NPVD) is a binding site for substrate. 152–155 (DTAR) is a binding site for substrate. Beta-D-fructose 1,6-bisphosphate is bound by residues arginine 157 and histidine 172. Histidine 179 serves as the catalytic Proton acceptor. Tyrosine 224 is modified (phosphotyrosine). Threonine 233 is a substrate binding site.

This sequence belongs to the LDH/MDH superfamily. LDH family. Homotetramer.

It is found in the cytoplasm. The catalysed reaction is (S)-lactate + NAD(+) = pyruvate + NADH + H(+). Its pathway is fermentation; pyruvate fermentation to lactate; (S)-lactate from pyruvate: step 1/1. With respect to regulation, allosterically activated by fructose 1,6-bisphosphate (FBP). Functionally, catalyzes the conversion of lactate to pyruvate. The chain is L-lactate dehydrogenase from Geobacillus sp. (strain WCH70).